Reading from the N-terminus, the 282-residue chain is Pantothenate synthetase (282 aa).

26–33 contributes to the ATP binding site; that stretch reads MGNLHEGH. His-33 serves as the catalytic Proton donor. Position 57 (Gln-57) interacts with (R)-pantoate. Gln-57 lines the beta-alanine pocket. An ATP-binding site is contributed by 144 to 147; the sequence is GQKD. (R)-pantoate is bound at residue Gln-150. ATP contacts are provided by residues Leu-173 and 181–184; that span reads LSSR.

This sequence belongs to the pantothenate synthetase family. Homodimer.

The protein resides in the cytoplasm. The enzyme catalyses (R)-pantoate + beta-alanine + ATP = (R)-pantothenate + AMP + diphosphate + H(+). Its pathway is cofactor biosynthesis; (R)-pantothenate biosynthesis; (R)-pantothenate from (R)-pantoate and beta-alanine: step 1/1. Catalyzes the condensation of pantoate with beta-alanine in an ATP-dependent reaction via a pantoyl-adenylate intermediate. The sequence is that of Pantothenate synthetase from Albidiferax ferrireducens (strain ATCC BAA-621 / DSM 15236 / T118) (Rhodoferax ferrireducens).